The following is a 120-amino-acid chain: Large ribosomal subunit protein bL20 (120 aa).

This sequence belongs to the bacterial ribosomal protein bL20 family.

In terms of biological role, binds directly to 23S ribosomal RNA and is necessary for the in vitro assembly process of the 50S ribosomal subunit. It is not involved in the protein synthesizing functions of that subunit. The protein is Large ribosomal subunit protein bL20 of Pseudoalteromonas translucida (strain TAC 125).